Consider the following 666-residue polypeptide: Calcium/calmodulin-dependent protein kinase type II subunit beta (666 aa).

Residues 14-272 enclose the Protein kinase domain; it reads YQLYEDIGKG…AHEALKHPWV (259 aa). Tyrosine 17 carries the post-translational modification Phosphotyrosine. ATP contacts are provided by residues 20-28 and lysine 43; that span reads IGKGAFSVV. Catalysis depends on aspartate 136, which acts as the Proton acceptor. The autoinhibitory domain stretch occupies residues 283–292; the sequence is HRQETVECLK. The residue at position 287 (threonine 287) is a Phosphothreonine; by autocatalysis. The segment at 291-301 is calmodulin-binding; sequence LKKFNARRKLK. 2 positions are modified to phosphothreonine; by autocatalysis: threonine 306 and threonine 307. Residues 349–534 are disordered; it reads ADGVKPQTNS…IPGPLPTPSR (186 aa). Over residues 354–369 the composition is skewed to polar residues; it reads PQTNSTKNSAAATSPK. A phosphoserine mark is found at serine 367, serine 394, and serine 397. Phosphothreonine is present on residues threonine 400 and threonine 401. Residues 432–447 show a composition bias toward pro residues; it reads LPCPSPAPFSPLPAPS. Over residues 479 to 491 the composition is skewed to low complexity; sequence SPALLGPLSSPSP. Pro residues predominate over residues 514–531; the sequence is PVGPPPCPSPTIPGPLPT.

Belongs to the protein kinase superfamily. CAMK Ser/Thr protein kinase family. CaMK subfamily. In terms of assembly, CAMK2 is composed of 4 different chains: alpha (CAMK2A), beta (CAMK2B), gamma (CAMK2G), and delta (CAMK2D). The different isoforms assemble into homo- or heteromultimeric holoenzymes composed of 12 subunits with two hexameric rings stacked one on top of the other. Interacts with SYNGAP1 and CAMK2N2. Interacts with MPDZ. Interacts with FOXO3. Interacts (when in a kinase inactive state not associated with calmodulin) with ARC; leading to target ARC to inactive synapses. Interacts with CAMK2N1; this interaction requires CAMK2B activation by Ca(2+). In terms of processing, autophosphorylation of Thr-287 following activation by Ca(2+)/calmodulin. Phosphorylation of Thr-287 locks the kinase into an activated state. Widely expressed. Expressed in adult and fetal brain. Expression is slightly lower in fetal brain. Expressed in skeletal muscle.

The protein resides in the cytoplasm. The protein localises to the cytoskeleton. It is found in the microtubule organizing center. It localises to the centrosome. Its subcellular location is the sarcoplasmic reticulum membrane. The protein resides in the synapse. It catalyses the reaction L-seryl-[protein] + ATP = O-phospho-L-seryl-[protein] + ADP + H(+). The catalysed reaction is L-threonyl-[protein] + ATP = O-phospho-L-threonyl-[protein] + ADP + H(+). With respect to regulation, activated by Ca(2+)/calmodulin. Binding of calmodulin results in conformational change that relieves intrasteric autoinhibition and allows autophosphorylation of Thr-287 which turns the kinase in a constitutively active form and confers to the kinase a Ca(2+)-independent activity. Calcium/calmodulin-dependent protein kinase that functions autonomously after Ca(2+)/calmodulin-binding and autophosphorylation, and is involved in dendritic spine and synapse formation, neuronal plasticity and regulation of sarcoplasmic reticulum Ca(2+) transport in skeletal muscle. In neurons, plays an essential structural role in the reorganization of the actin cytoskeleton during plasticity by binding and bundling actin filaments in a kinase-independent manner. This structural function is required for correct targeting of CaMK2A, which acts downstream of NMDAR to promote dendritic spine and synapse formation and maintain synaptic plasticity which enables long-term potentiation (LTP) and hippocampus-dependent learning. In developing hippocampal neurons, promotes arborization of the dendritic tree and in mature neurons, promotes dendritic remodeling. Also regulates the migration of developing neurons. Participates in the modulation of skeletal muscle function in response to exercise. In slow-twitch muscles, is involved in regulation of sarcoplasmic reticulum (SR) Ca(2+) transport and in fast-twitch muscle participates in the control of Ca(2+) release from the SR through phosphorylation of triadin, a ryanodine receptor-coupling factor, and phospholamban (PLN/PLB), an endogenous inhibitor of SERCA2A/ATP2A2. In response to interferon-gamma (IFN-gamma) stimulation, catalyzes phosphorylation of STAT1, stimulating the JAK-STAT signaling pathway. Phosphorylates reticulophagy regulator RETREG1 at 'Ser-151' under endoplasmic reticulum stress conditions which enhances RETREG1 oligomerization and its membrane scission and reticulophagy activity. The chain is Calcium/calmodulin-dependent protein kinase type II subunit beta (CAMK2B) from Homo sapiens (Human).